The chain runs to 205 residues: Macrophage immunometabolism regulator (205 aa).

Positions 1 to 40 (MEVDINGVNRTNNSVPSTAEGSSPSKPDPEKPRCSSTPCS) are disordered. Over residues 8 to 25 (VNRTNNSVPSTAEGSSPS) the composition is skewed to polar residues.

This sequence belongs to the UNC119-binding protein family. As to quaternary structure, interacts with unc119 family proteins; interaction preferentially takes place when unc119 proteins are unliganded with myristoylated proteins.

The protein localises to the cytoplasm. It is found in the cell projection. Its subcellular location is the cilium. Its function is as follows. May play a role in immune regulation through regulation of the macrophage function. May also play a role in trafficking of proteins via its interaction with unc119 family cargo adapters. May play a role in ciliary membrane localization. The protein is Macrophage immunometabolism regulator (macir) of Xenopus laevis (African clawed frog).